The following is a 414-amino-acid chain: MSGIIATYLIHDDSHNLEKKAEQIALGLTIGSWTHLPQLLQEQLKQHKGNVIHIVELAEHEHTNSYLRKKVKRGIIKIEYPLLNFSPDLPAILTTTFGKLSLDGEVKLIDLTFSDELKKHFPGPKFGIDGIRNLLQVHDRPLLMSIFKGMIGRNIGYLKTQLRDQAIGGVDIVKDDEILFENALTPLTKRIVSGKEVLQSVYETYGHKTLYAVNLTGRTFDLKENAKRAVQAGADILLFNVFAYGLDVLQSLAEDDEIPVPIMAHPAVSGAYSASKLYGISSPLLLGKLLRYAGADFSLFPSPYGSVALEKEEALAISKYLTEDDAFFKKSFSVPSAGIHPGFVPFIVRDFGKDVVINAGGGIHGHPNGAQGGGKAFRTAIEATLQNKPLHEVDDINLHSALQIWGNPSHEVKL.

Lys-99 serves as the catalytic Proton acceptor. Substrate-binding positions include Lys-148, 174–177 (KDDE), His-265, Gly-338, and 360–361 (GG). Positions 174, 176, and 177 each coordinate Mg(2+). The residue at position 174 (Lys-174) is an N6-carboxylysine.

The protein belongs to the RuBisCO large chain family. Type IV subfamily. In terms of assembly, homodimer. Mg(2+) is required as a cofactor.

The enzyme catalyses 5-methylsulfanyl-2,3-dioxopentyl phosphate = 2-hydroxy-5-methylsulfanyl-3-oxopent-1-enyl phosphate. The protein operates within amino-acid biosynthesis; L-methionine biosynthesis via salvage pathway; L-methionine from S-methyl-5-thio-alpha-D-ribose 1-phosphate: step 3/6. In terms of biological role, catalyzes the enolization of 2,3-diketo-5-methylthiopentyl-1-phosphate (DK-MTP-1-P) into 2-hydroxy-3-keto-5-methylthiopentenyl-1-phosphate (HK-MTPenyl-1-P). This Bacillus cereus (strain G9842) protein is 2,3-diketo-5-methylthiopentyl-1-phosphate enolase.